A 62-amino-acid chain; its full sequence is Sperm protamine P1 (62 aa).

The disordered stretch occupies residues 1-62 (MARYRRHSRS…RRYSRRRRRY (62 aa)).

This sequence belongs to the protamine P1 family. As to expression, testis.

The protein resides in the nucleus. The protein localises to the chromosome. In terms of biological role, protamines substitute for histones in the chromatin of sperm during the haploid phase of spermatogenesis. They compact sperm DNA into a highly condensed, stable and inactive complex. The polypeptide is Sperm protamine P1 (PRM1) (Sminthopsis longicaudata (Long-tailed dunnart)).